The primary structure comprises 339 residues: Phytoene synthase (339 aa).

This sequence belongs to the phytoene/squalene synthase family. ATP is required as a cofactor. Mn(2+) serves as cofactor. The cofactor is Mg(2+).

Its pathway is carotenoid biosynthesis; phytoene biosynthesis. Functionally, involved in the biosynthesis of carotenoids. Catalyzes the condensation of two molecules of geranylgeranyl diphosphate (GGPP) to give prephytoene diphosphate (PPPP) and the subsequent rearrangement of the cyclopropylcarbinyl intermediate to yield phytoene. This Rhodobacter capsulatus (strain ATCC BAA-309 / NBRC 16581 / SB1003) protein is Phytoene synthase (crtB).